We begin with the raw amino-acid sequence, 108 residues long: UPF0060 membrane protein YnfA (108 aa).

The Periplasmic portion of the chain corresponds to 1-5; sequence MLKTT. Residues 6–26 form a helical membrane-spanning segment; that stretch reads LLFFVTALCEIIGCFLPWLWL. Topologically, residues 27-30 are cytoplasmic; it reads KRGA. The chain crosses the membrane as a helical span at residues 31 to 51; that stretch reads SMWWLLPAAASLALFVWLLTL. Residues 52–60 lie on the Periplasmic side of the membrane; sequence HPAASGRVY. A helical membrane pass occupies residues 61–81; the sequence is AAYGGVYVCTALLWLRVVDGV. Residues 82–84 lie on the Cytoplasmic side of the membrane; it reads RLT. The chain crosses the membrane as a helical span at residues 85 to 105; it reads VYDWCGALIALCGMLIIVVGW. Topologically, residues 106–108 are periplasmic; the sequence is GRT.

It belongs to the UPF0060 family.

It localises to the cell inner membrane. The protein is UPF0060 membrane protein YnfA of Salmonella schwarzengrund (strain CVM19633).